We begin with the raw amino-acid sequence, 740 residues long: Alpha-1,6-mannosylglycoprotein 6-beta-N-acetylglucosaminyltransferase A (740 aa).

Residues 1–13 (MAFFSPWKLSSQK) are Cytoplasmic-facing. The chain crosses the membrane as a helical; Signal-anchor for type II membrane protein span at residues 14-30 (LGFFLVTFGFIWGMMLL). The Lumenal segment spans residues 31–740 (HFTIQQRTQP…GQVALCKDCL (710 aa)). N-linked (GlcNAc...) asparagine glycosylation is found at Asn-109, Asn-114, and Asn-117. 9 cysteine pairs are disulfide-bonded: Cys-144–Cys-182, Cys-155–Cys-195, Cys-171–Cys-337, Cys-371–Cys-625, Cys-648–Cys-723, Cys-652–Cys-725, Cys-659–Cys-712, Cys-680–Cys-701, and Cys-736–Cys-739. A sufficient for catalytic activity region spans residues 212 to 740 (NSLAEIRTDF…GQVALCKDCL (529 aa)). Asn-333 carries N-linked (GlcNAc...) asparagine glycosylation. 377–378 (DS) contacts substrate. N-linked (GlcNAc...) asparagine glycosylation is found at Asn-432 and Asn-446. Glu-525 provides a ligand contact to UDP-N-acetyl-alpha-D-glucosamine. Lys-553 lines the substrate pocket.

The protein belongs to the glycosyltransferase 18 family. N-glycosylated. In terms of processing, a secreted form is released from the membrane after cleavage by gamma-secretase. Detected in cerebellum.

Its subcellular location is the golgi apparatus membrane. The protein resides in the perikaryon. It is found in the secreted. It catalyses the reaction N(4)-{beta-D-GlcNAc-(1-&gt;2)-[beta-D-GlcNAc-(1-&gt;4)]-alpha-D-Man-(1-&gt;3)-[beta-D-GlcNAc-(1-&gt;2)-alpha-D-Man-(1-&gt;6)]-beta-D-Man-(1-&gt;4)-beta-D-GlcNAc-(1-&gt;4)-beta-D-GlcNAc}-L-asparaginyl-[protein] + UDP-N-acetyl-alpha-D-glucosamine = N(4)-{beta-D-GlcNAc-(1-&gt;2)-[beta-D-GlcNAc-(1-&gt;4)]-alpha-D-Man-(1-&gt;3)-[beta-D-GlcNAc-(1-&gt;2)-[beta-D-GlcNAc-(1-&gt;6)]-alpha-D-Man-(1-&gt;6)]-beta-D-Man-(1-&gt;4)-beta-D-GlcNAc-(1-&gt;4)-beta-D-GlcNAc}-L-asparaginyl-[protein] + UDP + H(+). It participates in protein modification; protein glycosylation. Catalyzes the addition of N-acetylglucosamine (GlcNAc) in beta 1-6 linkage to the alpha-linked mannose of biantennary N-linked oligosaccharides. Catalyzes an important step in the biosynthesis of branched, complex-type N-glycans, such as those found on EGFR, TGFR (TGF-beta receptor) and CDH2. Via its role in the biosynthesis of complex N-glycans, plays an important role in the activation of cellular signaling pathways, reorganization of the actin cytoskeleton, cell-cell adhesion and cell migration. MGAT5-dependent EGFR N-glycosylation enhances the interaction between EGFR and LGALS3 and thereby prevents rapid EGFR endocytosis and prolongs EGFR signaling. Required for efficient interaction between TGFB1 and its receptor. Enhances activation of intracellular signaling pathways by several types of growth factors, including FGF2, PDGF, IGF, TGFB1 and EGF. MGAT5-dependent CDH2 N-glycosylation inhibits CDH2-mediated homotypic cell-cell adhesion and contributes to the regulation of downstream signaling pathways. Promotes cell migration. Contributes to the regulation of the inflammatory response. MGAT5-dependent TCR N-glycosylation enhances the interaction between TCR and LGALS3, limits agonist-induced TCR clustering, and thereby dampens TCR-mediated responses to antigens. Required for normal leukocyte evasation and accumulation at sites of inflammation. Inhibits attachment of monocytes to the vascular endothelium and subsequent monocyte diapedesis. Functionally, promotes proliferation of umbilical vein endothelial cells and angiogenesis, at least in part by promoting the release of the growth factor FGF2 from the extracellular matrix. This is Alpha-1,6-mannosylglycoprotein 6-beta-N-acetylglucosaminyltransferase A (Mgat5) from Mus musculus (Mouse).